Here is a 158-residue protein sequence, read N- to C-terminus: Large ribosomal subunit protein uL16 (158 aa).

The protein belongs to the universal ribosomal protein uL16 family. In terms of assembly, part of the 50S ribosomal subunit.

Binds 23S rRNA and is also seen to make contacts with the A and possibly P site tRNAs. This chain is Large ribosomal subunit protein uL16, found in Parasynechococcus marenigrum (strain WH8102).